A 143-amino-acid polypeptide reads, in one-letter code: Putative transmembrane protein ORF32 (143 aa).

2 consecutive transmembrane segments (helical) span residues 20–42 (GISG…SFTL) and 52–74 (WPLI…EGGV).

The protein resides in the host membrane. The sequence is that of Putative transmembrane protein ORF32 from Haloarcula hispanica (His1V).